The primary structure comprises 296 residues: NAD kinase (296 aa).

Asp72 serves as the catalytic Proton acceptor. Residues 72–73 (DG), 146–147 (ND), Arg157, Lys174, Asp176, 187–192 (TAYALS), and Gln247 contribute to the NAD(+) site.

The protein belongs to the NAD kinase family. A divalent metal cation serves as cofactor.

The protein resides in the cytoplasm. It carries out the reaction NAD(+) + ATP = ADP + NADP(+) + H(+). In terms of biological role, involved in the regulation of the intracellular balance of NAD and NADP, and is a key enzyme in the biosynthesis of NADP. Catalyzes specifically the phosphorylation on 2'-hydroxyl of the adenosine moiety of NAD to yield NADP. In Pseudomonas putida (strain GB-1), this protein is NAD kinase.